We begin with the raw amino-acid sequence, 290 residues long: S-methyl-5'-thioadenosine phosphorylase (290 aa).

Residues Ser11, 53-54, and 86-87 contribute to the phosphate site; these read RH and SA. Met184 is a substrate binding site. Thr185 serves as a coordination point for phosphate. 208–210 lines the substrate pocket; that stretch reads DYD.

This sequence belongs to the PNP/MTAP phosphorylase family. MTAP subfamily. In terms of assembly, homohexamer. Dimer of a homotrimer.

It catalyses the reaction S-methyl-5'-thioadenosine + phosphate = 5-(methylsulfanyl)-alpha-D-ribose 1-phosphate + adenine. It participates in amino-acid biosynthesis; L-methionine biosynthesis via salvage pathway; S-methyl-5-thio-alpha-D-ribose 1-phosphate from S-methyl-5'-thioadenosine (phosphorylase route): step 1/1. Its function is as follows. Catalyzes the reversible phosphorylation of S-methyl-5'-thioadenosine (MTA) to adenine and 5-methylthioribose-1-phosphate. Involved in the breakdown of MTA, a major by-product of polyamine biosynthesis. Responsible for the first step in the methionine salvage pathway after MTA has been generated from S-adenosylmethionine. Has broad substrate specificity with 6-aminopurine nucleosides as preferred substrates. In Cereibacter sphaeroides (strain ATCC 17023 / DSM 158 / JCM 6121 / CCUG 31486 / LMG 2827 / NBRC 12203 / NCIMB 8253 / ATH 2.4.1.) (Rhodobacter sphaeroides), this protein is S-methyl-5'-thioadenosine phosphorylase.